A 200-amino-acid polypeptide reads, in one-letter code: ATP-dependent Clp protease proteolytic subunit 2 (200 aa).

The active-site Nucleophile is the Ser99. Residue His123 is part of the active site.

This sequence belongs to the peptidase S14 family. In terms of assembly, fourteen ClpP subunits assemble into 2 heptameric rings which stack back to back to give a disk-like structure with a central cavity, resembling the structure of eukaryotic proteasomes.

It is found in the cytoplasm. It carries out the reaction Hydrolysis of proteins to small peptides in the presence of ATP and magnesium. alpha-casein is the usual test substrate. In the absence of ATP, only oligopeptides shorter than five residues are hydrolyzed (such as succinyl-Leu-Tyr-|-NHMec, and Leu-Tyr-Leu-|-Tyr-Trp, in which cleavage of the -Tyr-|-Leu- and -Tyr-|-Trp bonds also occurs).. In terms of biological role, cleaves peptides in various proteins in a process that requires ATP hydrolysis. Has a chymotrypsin-like activity. Plays a major role in the degradation of misfolded proteins. This Symbiobacterium thermophilum (strain DSM 24528 / JCM 14929 / IAM 14863 / T) protein is ATP-dependent Clp protease proteolytic subunit 2.